The following is a 960-amino-acid chain: Glycine dehydrogenase (decarboxylating) (960 aa).

Residue Lys709 is modified to N6-(pyridoxal phosphate)lysine.

This sequence belongs to the GcvP family. In terms of assembly, the glycine cleavage system is composed of four proteins: P, T, L and H. Pyridoxal 5'-phosphate is required as a cofactor.

It catalyses the reaction N(6)-[(R)-lipoyl]-L-lysyl-[glycine-cleavage complex H protein] + glycine + H(+) = N(6)-[(R)-S(8)-aminomethyldihydrolipoyl]-L-lysyl-[glycine-cleavage complex H protein] + CO2. The glycine cleavage system catalyzes the degradation of glycine. The P protein binds the alpha-amino group of glycine through its pyridoxal phosphate cofactor; CO(2) is released and the remaining methylamine moiety is then transferred to the lipoamide cofactor of the H protein. This is Glycine dehydrogenase (decarboxylating) from Hahella chejuensis (strain KCTC 2396).